A 699-amino-acid chain; its full sequence is Ciliated left-right organizer metallopeptidase (699 aa).

The first 18 residues, 1–18 (MKMWRLLLLGVATGRCLH), serve as a signal peptide directing secretion. The Extracellular segment spans residues 19-663 (EETQKSVRLL…SLDHNPSMTE (645 aa)). Residue His-238 coordinates Zn(2+). Glu-239 is a catalytic residue. Residues His-242 and His-318 each contribute to the Zn(2+) site. The helical transmembrane segment at 664–684 (LLLSTGFCLLVLILVGALGTL) threads the bilayer. Residues 685–699 (AYQKRAMLQVAPSTT) are Cytoplasmic-facing.

It belongs to the peptidase M8 family. Zn(2+) is required as a cofactor. Specifically expressed in ciliated left-right organizer.

The protein localises to the membrane. Functionally, putative metalloproteinase that plays a role in left-right patterning process. The sequence is that of Ciliated left-right organizer metallopeptidase from Mus musculus (Mouse).